The primary structure comprises 219 residues: Flagellar L-ring protein (219 aa).

An N-terminal signal peptide occupies residues 1–14; sequence MKRLVLISLVLAAG. C15 is lipidated: N-palmitoyl cysteine. C15 carries the S-diacylglycerol cysteine lipid modification.

The protein belongs to the FlgH family. As to quaternary structure, the basal body constitutes a major portion of the flagellar organelle and consists of four rings (L,P,S, and M) mounted on a central rod.

Its subcellular location is the cell outer membrane. The protein localises to the bacterial flagellum basal body. Its function is as follows. Assembles around the rod to form the L-ring and probably protects the motor/basal body from shearing forces during rotation. In Dechloromonas aromatica (strain RCB), this protein is Flagellar L-ring protein.